A 1770-amino-acid polypeptide reads, in one-letter code: AF4/FMR2 family member lilli (1770 aa).

Low complexity-rich tracts occupy residues 1–19 (MAQQ…HPHQ), 154–204 (LGHS…YLKQ), and 227–269 (PSSS…GTTP). 6 disordered regions span residues 1–28 (MAQQ…NQLQ), 134–327 (SRHA…EKDI), 402–660 (TSLL…PGNV), 761–805 (LHSA…LQLP), 822–1173 (MQKA…KQGQ), and 1291–1390 (KHEH…QISK). A compositionally biased stretch (polar residues) spans 402-414 (TSLLTTPPHASQG). Positions 434 to 447 (KAAAALSPTAAAKP) are enriched in low complexity. Basic and acidic residues predominate over residues 448 to 461 (LKTEKNHTLEKQDS). Over residues 463–474 (LENDLELSESED) the composition is skewed to acidic residues. 2 positions are modified to phosphoserine: serine 470 and serine 472. The segment covering 483–503 (SAGNSSNSSESDSSESGSESS) has biased composition (low complexity). Residues 511–520 (QHHHHNHHHQ) show a composition bias toward basic residues. Over residues 521–552 (QQQQQLQQQQQQQLLQQKQQHQQILQQQQRQL) the composition is skewed to low complexity. Over residues 582–614 (FGSGGAGNGGCSTASSGGGGGGSGSGGGSGSSS) the composition is skewed to gly residues. A compositionally biased stretch (low complexity) spans 615–625 (GIGTMSSGSSS). Polar residues-rich tracts occupy residues 626 to 638 (NKTP…NKWT) and 647 to 659 (ANQT…SPGN). Positions 768 to 800 (SDSGTSGSGSTSSSSSSSDSAPGEVVPMPGPGE) are enriched in low complexity. Residues 844 to 854 (QRQKKPRKKKP) are compositionally biased toward basic residues. Phosphoserine is present on residues serine 863 and serine 864. 5 stretches are compositionally biased toward low complexity: residues 880–893 (AAAA…ATAT), 909–928 (QQQS…SSSQ), 994–1028 (ANAS…SSSS), 1071–1081 (SGSSSPSSSSS), and 1111–1131 (SQHS…SSTS). The segment at residues 900–912 (KKGRGRPRKQQQS) is a DNA-binding region (a.T hook). A phosphoserine mark is found at serine 920 and serine 922. Basic and acidic residues-rich tracts occupy residues 1295-1312 (PHPV…ESKF) and 1321-1355 (FQLK…EREQ). Serine 1442 carries the phosphoserine modification. Composition is skewed to low complexity over residues 1483–1499 (AAAT…TSTA) and 1656–1676 (GNTP…SGSN). Disordered regions lie at residues 1483 to 1502 (AAAT…APPA) and 1656 to 1683 (GNTP…GKIV).

It belongs to the AF4 family.

The protein resides in the nucleus. Has a role in transcriptional regulation. Acts in parallel with the Ras/MAPK and the PI3K/PKB pathways in the control of cell identity and cellular growth. Essential for regulation of the cytoskeleton and cell growth but not for cell proliferation or growth rate. Required specifically for the microtubule-based basal transport of lipid droplets. Plays a partially redundant function downstream of Raf in cell fate specification in the developing eye. Pair-rule protein that regulates embryonic cellularization, gastrulation and segmentation. The sequence is that of AF4/FMR2 family member lilli from Drosophila pseudoobscura pseudoobscura (Fruit fly).